Consider the following 539-residue polypeptide: Tyrosine-protein kinase csk-1 (539 aa).

One can recognise an SH3 domain in the interval 43 to 110; the sequence is SPGNDVIVTR…HADCVVRING (68 aa). The tract at residues 129-148 is disordered; sequence PGAASTTSSTSSHHSTAANH. Residues 131-146 show a composition bias toward low complexity; sequence AASTTSSTSSHHSTAA. The region spanning 151–241 is the SH2 domain; it reads WFHSMISREN…GLCHRLVTPI (91 aa). Positions 283 to 535 constitute a Protein kinase domain; sequence IDVGDTIGHG…GQVLQRLTTI (253 aa). ATP-binding positions include 289–297 and lysine 310; that span reads IGHGEFGDV. Aspartate 403 functions as the Proton acceptor in the catalytic mechanism.

Belongs to the protein kinase superfamily. Tyr protein kinase family. CSK subfamily. Requires Mg(2+) as cofactor. Mn(2+) serves as cofactor. In terms of tissue distribution, expressed predominantly in pharyngeal muscles in procorpus, metacorpus and terminal bulb. Expressed also in some neurons (ASE, ADF, AVA, AUA, RMDV and BAG) in the head region, anchor cell, vulva, cells around anus, body wall muscle and gondal distal tip cells.

The enzyme catalyses L-tyrosyl-[protein] + ATP = O-phospho-L-tyrosyl-[protein] + ADP + H(+). Non-receptor tyrosine-protein kinase which plays a role in pharynx function by regulating pumping and the orientation of pharyngeal muscle fibers, independently of src-1 and src-2. May phosphorylate and thereby negatively regulate src-1 and src-2 activities. The protein is Tyrosine-protein kinase csk-1 of Caenorhabditis elegans.